Here is a 179-residue protein sequence, read N- to C-terminus: Large ribosomal subunit protein uL6 (179 aa).

The protein belongs to the universal ribosomal protein uL6 family. As to quaternary structure, part of the 50S ribosomal subunit.

In terms of biological role, this protein binds to the 23S rRNA, and is important in its secondary structure. It is located near the subunit interface in the base of the L7/L12 stalk, and near the tRNA binding site of the peptidyltransferase center. This chain is Large ribosomal subunit protein uL6, found in Leptospira borgpetersenii serovar Hardjo-bovis (strain JB197).